Reading from the N-terminus, the 227-residue chain is Cytochrome c oxidase subunit 2 (227 aa).

The Mitochondrial intermembrane portion of the chain corresponds to 1-14; it reads MAYPHQLGFQDATS. A helical membrane pass occupies residues 15–45; the sequence is PIMEELLSFHDHTLMIVFLISSLVLYLISLM. At 46 to 59 the chain is on the mitochondrial matrix side; the sequence is LTTKLTHTSTMDAQ. Residues 60 to 87 traverse the membrane as a helical segment; it reads EVETVWTILPAIILIMIALPSLRILYMM. Residues 88–227 are Mitochondrial intermembrane-facing; it reads DEINNPLLTV…SFENWTTSMT (140 aa). Residues His161, Cys196, Glu198, Cys200, His204, and Met207 each contribute to the Cu cation site. Glu198 contributes to the Mg(2+) binding site.

The protein belongs to the cytochrome c oxidase subunit 2 family. Component of the cytochrome c oxidase (complex IV, CIV), a multisubunit enzyme composed of 14 subunits. The complex is composed of a catalytic core of 3 subunits MT-CO1, MT-CO2 and MT-CO3, encoded in the mitochondrial DNA, and 11 supernumerary subunits COX4I, COX5A, COX5B, COX6A, COX6B, COX6C, COX7A, COX7B, COX7C, COX8 and NDUFA4, which are encoded in the nuclear genome. The complex exists as a monomer or a dimer and forms supercomplexes (SCs) in the inner mitochondrial membrane with NADH-ubiquinone oxidoreductase (complex I, CI) and ubiquinol-cytochrome c oxidoreductase (cytochrome b-c1 complex, complex III, CIII), resulting in different assemblies (supercomplex SCI(1)III(2)IV(1) and megacomplex MCI(2)III(2)IV(2)). Found in a complex with TMEM177, COA6, COX18, COX20, SCO1 and SCO2. Interacts with TMEM177 in a COX20-dependent manner. Interacts with COX20. Interacts with COX16. Cu cation serves as cofactor.

The protein resides in the mitochondrion inner membrane. The catalysed reaction is 4 Fe(II)-[cytochrome c] + O2 + 8 H(+)(in) = 4 Fe(III)-[cytochrome c] + 2 H2O + 4 H(+)(out). Component of the cytochrome c oxidase, the last enzyme in the mitochondrial electron transport chain which drives oxidative phosphorylation. The respiratory chain contains 3 multisubunit complexes succinate dehydrogenase (complex II, CII), ubiquinol-cytochrome c oxidoreductase (cytochrome b-c1 complex, complex III, CIII) and cytochrome c oxidase (complex IV, CIV), that cooperate to transfer electrons derived from NADH and succinate to molecular oxygen, creating an electrochemical gradient over the inner membrane that drives transmembrane transport and the ATP synthase. Cytochrome c oxidase is the component of the respiratory chain that catalyzes the reduction of oxygen to water. Electrons originating from reduced cytochrome c in the intermembrane space (IMS) are transferred via the dinuclear copper A center (CU(A)) of subunit 2 and heme A of subunit 1 to the active site in subunit 1, a binuclear center (BNC) formed by heme A3 and copper B (CU(B)). The BNC reduces molecular oxygen to 2 water molecules using 4 electrons from cytochrome c in the IMS and 4 protons from the mitochondrial matrix. This chain is Cytochrome c oxidase subunit 2 (MT-CO2), found in Georychus capensis (Cape mole rat).